Here is a 129-residue protein sequence, read N- to C-terminus: Phosphoribosyl-AMP cyclohydrolase (129 aa).

Aspartate 84 serves as a coordination point for Mg(2+). Cysteine 85 is a Zn(2+) binding site. Mg(2+)-binding residues include aspartate 86 and aspartate 88. Zn(2+) contacts are provided by cysteine 101 and cysteine 108.

The protein belongs to the PRA-CH family. As to quaternary structure, homodimer. It depends on Mg(2+) as a cofactor. Zn(2+) serves as cofactor.

It is found in the cytoplasm. It carries out the reaction 1-(5-phospho-beta-D-ribosyl)-5'-AMP + H2O = 1-(5-phospho-beta-D-ribosyl)-5-[(5-phospho-beta-D-ribosylamino)methylideneamino]imidazole-4-carboxamide. It functions in the pathway amino-acid biosynthesis; L-histidine biosynthesis; L-histidine from 5-phospho-alpha-D-ribose 1-diphosphate: step 3/9. Catalyzes the hydrolysis of the adenine ring of phosphoribosyl-AMP. This Halobacterium salinarum (strain ATCC 700922 / JCM 11081 / NRC-1) (Halobacterium halobium) protein is Phosphoribosyl-AMP cyclohydrolase.